We begin with the raw amino-acid sequence, 179 residues long: Caveolin-1 (179 aa).

An N-acetylserine modification is found at Ser-2. Residue Ser-2 is modified to Phosphoserine. The tract at residues Ser-2 to Val-95 is required for homooligomerization. Topologically, residues Ser-2–Ser-105 are cytoplasmic. Position 5 is an N6-acetyllysine; alternate (Lys-5). Lys-5 is covalently cross-linked (Glycyl lysine isopeptide (Lys-Gly) (interchain with G-Cter in ubiquitin); alternate). At Tyr-6 the chain carries Phosphotyrosine. Position 9 is a phosphoserine (Ser-9). A Phosphotyrosine; by ABL1 modification is found at Tyr-14. Tyr-25 bears the Phosphotyrosine mark. Glycyl lysine isopeptide (Lys-Gly) (interchain with G-Cter in ubiquitin) cross-links involve residues Lys-26 and Lys-30. Ser-37 bears the Phosphoserine mark. Residues Lys-39, Lys-48, and Lys-58 each participate in a glycyl lysine isopeptide (Lys-Gly) (interchain with G-Cter in ubiquitin) cross-link. The segment at Asp-83 to Val-95 is interaction with CAVIN3. An intramembrane region (helical) is located at residues Ala-106–Leu-126. Topologically, residues His-127–Ile-179 are cytoplasmic. The interacts with SPRY1, SPRY2, SPRY3 and SPRY4 stretch occupies residues Val-132 to Gln-143. 3 S-palmitoyl cysteine lipidation sites follow: Cys-134, Cys-144, and Cys-157. The tract at residues Ser-150–Phe-161 is interacts with SPRY1, SPRY2, and SPRY4. Residues Phe-168–Ile-179 form an interacts with SPRY1, SPRY2, SPRY3 and SPRY4 region.

This sequence belongs to the caveolin family. Homooligomer. Interacts with GLIPR2. Interacts with NOSTRIN. Interacts with SNAP25 and STX1A. Interacts (via the N-terminus) with DPP4; the interaction is direct. Interacts with CTNNB1, CDH1 and JUP. Interacts with PACSIN2; this interaction induces membrane tubulation. Interacts with SLC7A9. Interacts with BMX and BTK. Interacts with TGFBR1. Interacts with CAVIN3 (via leucine-zipper domain) in a cholesterol-sensitive manner. Interacts with CAVIN1. Interacts with EHD2 in a cholesterol-dependent manner. Forms a ternary complex with UBXN6 and VCP; mediates CAV1 targeting to lysosomes for degradation. Interacts with ABCG1; this interaction regulates ABCG1-mediated cholesterol efflux. Interacts with NEU3; this interaction enhances NEU3 sialidase activity within caveola. Interacts (via C-terminus) with SPRY1, SPRY2 (via C-terminus), SPRY3, and SPRY4. Interacts with IGFBP5; this interaction allows trafficking of IGFBP5 from the plasma membrane to the nucleus. Phosphorylated at Tyr-14 by ABL1 in response to oxidative stress. Post-translationally, ubiquitinated. Undergo monoubiquitination and multi- and/or polyubiquitination. Monoubiquitination of N-terminal lysines promotes integration in a ternary complex with UBXN6 and VCP which promotes oligomeric CAV1 targeting to lysosomes for degradation. Ubiquitinated by ZNRF1; leading to degradation and modulation of the TLR4-mediated immune response.

Its subcellular location is the golgi apparatus membrane. It localises to the cell membrane. The protein localises to the membrane. The protein resides in the caveola. It is found in the membrane raft. Its function is as follows. May act as a scaffolding protein within caveolar membranes. Forms a stable heterooligomeric complex with CAV2 that targets to lipid rafts and drives caveolae formation. Mediates the recruitment of CAVIN proteins (CAVIN1/2/3/4) to the caveolae. Interacts directly with G-protein alpha subunits and can functionally regulate their activity. Involved in the costimulatory signal essential for T-cell receptor (TCR)-mediated T-cell activation. Its binding to DPP4 induces T-cell proliferation and NF-kappa-B activation in a T-cell receptor/CD3-dependent manner. Recruits CTNNB1 to caveolar membranes and may regulate CTNNB1-mediated signaling through the Wnt pathway. Negatively regulates TGFB1-mediated activation of SMAD2/3 by mediating the internalization of TGFBR1 from membrane rafts leading to its subsequent degradation. Binds 20(S)-hydroxycholesterol (20(S)-OHC). This is Caveolin-1 (CAV1) from Eulemur macaco macaco (Black lemur).